Consider the following 635-residue polypeptide: Threonine--tRNA ligase (635 aa).

The tract at residues 1–144 (MQLLLIHSDY…RSIRPEGTQR (144 aa)) is editing domain. The tract at residues 215–514 (PHVELMRRLE…TEEGKVPMLP (300 aa)) is catalytic. Zn(2+) contacts are provided by Cys-307, His-359, and His-483.

This sequence belongs to the class-II aminoacyl-tRNA synthetase family. Homodimer. The cofactor is Zn(2+).

Its subcellular location is the cytoplasm. It catalyses the reaction tRNA(Thr) + L-threonine + ATP = L-threonyl-tRNA(Thr) + AMP + diphosphate + H(+). Catalyzes the attachment of threonine to tRNA(Thr) in a two-step reaction: L-threonine is first activated by ATP to form Thr-AMP and then transferred to the acceptor end of tRNA(Thr). Also edits incorrectly charged L-seryl-tRNA(Thr). The sequence is that of Threonine--tRNA ligase from Methanosarcina barkeri (strain Fusaro / DSM 804).